Reading from the N-terminus, the 265-residue chain is ETS-related transcription factor Elf-5 (265 aa).

The PNT domain occupies 43–129 (YPAFEHQTAC…FILQNIRTQG (87 aa)). The segment at residues 173 to 254 (SHLWEFVRDL…VDRRLVYKFG (82 aa)) is a DNA-binding region (ETS).

Belongs to the ETS family. Expressed exclusively in tissues with a high content of epithelial cells. Highly expressed in salivary gland, mammary gland, kidney and prostate. Weakly expressed in placenta and lung. Isoform 1 and isoform 2 are differentially expressed in different tissues. In the kidney, only isoform 1 was expressed, while prostate expressed both isoforms, with levels of isoform 2 being higher. Expression is up-regulated during keratinocyte differentiation. Several epithelial carcinoma cell lines showed lack of expression.

It localises to the nucleus. In terms of biological role, transcriptionally activator that may play a role in regulating the later stages of keratinocytes terminal differentiation. Isoform 2 binds to DNA sequences containing the consensus nucleotide core sequence GGA[AT]. Transcriptionally activates SPRR2A and the parotid gland-specific PSP promoters. This Homo sapiens (Human) protein is ETS-related transcription factor Elf-5 (ELF5).